The chain runs to 687 residues: Transcription activator of gluconeogenesis SNOG_12336 (687 aa).

The tract at residues methionine 1–arginine 56 is disordered. Over residues glycine 32 to alanine 45 the composition is skewed to polar residues. The zn(2)-C6 fungal-type DNA-binding region spans cysteine 63 to cysteine 91. Composition is skewed to polar residues over residues proline 150 to serine 159 and histidine 169 to proline 179. Disordered stretches follow at residues proline 150 to phenylalanine 214, glutamate 300 to arginine 411, and glycine 536 to alanine 561. Low complexity predominate over residues proline 195–proline 212. The span at glutamate 300–threonine 318 shows a compositional bias: polar residues. A compositionally biased stretch (low complexity) spans proline 342–alanine 357. Polar residues-rich tracts occupy residues asparagine 362–threonine 384, arginine 392–histidine 402, and methionine 546–alanine 561. The PAS domain occupies asparagine 482–threonine 553.

Belongs to the ERT1/acuK family.

The protein localises to the nucleus. Transcription factor which regulates nonfermentable carbon utilization. Activator of gluconeogenetic genes. The chain is Transcription activator of gluconeogenesis SNOG_12336 from Phaeosphaeria nodorum (strain SN15 / ATCC MYA-4574 / FGSC 10173) (Glume blotch fungus).